The chain runs to 60 residues: MKVRVDADACIGCGVCENLCPDVFQLGDDGKAKVLQPETDLPCAKDAADSCPTGAISVEE.

4Fe-4S ferredoxin-type domains lie at 2 to 29 (KVRVDADACIGCGVCENLCPDVFQLGDD) and 30 to 60 (GKAKVLQPETDLPCAKDAADSCPTGAISVEE). Residues Cys10, Cys13, and Cys16 each contribute to the [4Fe-4S] cluster site. Cys20 and Cys43 are disulfide-bonded. Cys51 serves as a coordination point for [4Fe-4S] cluster.

As to quaternary structure, monomer. [4Fe-4S] cluster is required as a cofactor.

Its function is as follows. Ferredoxins are iron-sulfur proteins that transfer electrons in a wide variety of metabolic reactions. In Thermotoga maritima (strain ATCC 43589 / DSM 3109 / JCM 10099 / NBRC 100826 / MSB8), this protein is Ferredoxin (fdx).